We begin with the raw amino-acid sequence, 491 residues long: Protein DETOXIFICATION 28 (491 aa).

12 helical membrane-spanning segments follow: residues 47-67, 77-97, 127-147, 160-180, 192-212, 228-248, 272-292, 302-322, 352-372, 387-407, 414-434, and 444-464; these read IVGPAIFTRVTTNLIFVITQA, LAAISIVNNVIIGFNYSLFIG, IVLFLFSILLLPMYIFATPIL, SGIISVWAIPTHFSFAFFFPI, VIAISSGVSLVVHIFVCWLFV, VSWWLNVFILFTYTTCGGCPL, GIMVCLENWYYRMLIVMTGNL, MSICMSINGLEMMVPLAFFAG, IIGIIISVLIYFLLDQIGWMF, ILLSFAILLNSVQPVLSGVAV, LVAFINLGCYYFIGLPLGIVM, and GIWAGMIFGGTMVQTLILIFI.

This sequence belongs to the multi antimicrobial extrusion (MATE) (TC 2.A.66.1) family.

It localises to the membrane. In Arabidopsis thaliana (Mouse-ear cress), this protein is Protein DETOXIFICATION 28.